We begin with the raw amino-acid sequence, 331 residues long: Chitin synthase export chaperone (331 aa).

A run of 7 helical transmembrane segments spans residues 52 to 72, 84 to 104, 113 to 133, 150 to 170, 184 to 204, 219 to 239, and 249 to 269; these read GAASFLHIIALGMTVIMILHI, IITFFYIYMALTVCSLVIDAG, FPWFVAVQNGLTSALCTSLLV, VWLLRLTSTVMFAVSFLISIL, LAMFIVLYIINAICIAVYLVM, LGHIAFGLLVFIAGQVIMYAF, and HYLDGLFFATFCNLLAVMMVY.

This sequence belongs to the CHS7 family. Interacts with chs3.

It localises to the endoplasmic reticulum membrane. Functionally, chaperone required for the export of the chitin synthase chs3 from the endoplasmic reticulum. The protein is Chitin synthase export chaperone (chs7) of Emericella nidulans (strain FGSC A4 / ATCC 38163 / CBS 112.46 / NRRL 194 / M139) (Aspergillus nidulans).